A 718-amino-acid chain; its full sequence is DNA ligase (718 aa).

NAD(+) is bound by residues aspartate 34–aspartate 38, serine 83–leucine 84, and glutamate 115. The active-site N6-AMP-lysine intermediate is lysine 117. Positions 138, 186, 302, and 326 each coordinate NAD(+). Zn(2+) contacts are provided by cysteine 420, cysteine 423, cysteine 438, and cysteine 444. A BRCT domain is found at proline 604–asparagine 694.

The protein belongs to the NAD-dependent DNA ligase family. LigA subfamily. Requires Mg(2+) as cofactor. Mn(2+) serves as cofactor.

The catalysed reaction is NAD(+) + (deoxyribonucleotide)n-3'-hydroxyl + 5'-phospho-(deoxyribonucleotide)m = (deoxyribonucleotide)n+m + AMP + beta-nicotinamide D-nucleotide.. Functionally, DNA ligase that catalyzes the formation of phosphodiester linkages between 5'-phosphoryl and 3'-hydroxyl groups in double-stranded DNA using NAD as a coenzyme and as the energy source for the reaction. It is essential for DNA replication and repair of damaged DNA. The chain is DNA ligase from Roseiflexus castenholzii (strain DSM 13941 / HLO8).